Reading from the N-terminus, the 412-residue chain is Probable tRNA pseudouridine synthase D (412 aa).

The Nucleophile role is filled by Asp97. The TRUD domain occupies 167 to 370 (ALPNYYGYQR…YGGYRKVVLT (204 aa)).

It belongs to the pseudouridine synthase TruD family.

The catalysed reaction is uridine(13) in tRNA = pseudouridine(13) in tRNA. In terms of biological role, could be responsible for synthesis of pseudouridine from uracil-13 in transfer RNAs. In Pyrobaculum islandicum (strain DSM 4184 / JCM 9189 / GEO3), this protein is Probable tRNA pseudouridine synthase D.